The primary structure comprises 310 residues: Protein BIG GRAIN 1 (310 aa).

Residues 77–140 (SYRARAPGPH…EKKAKKPGAS (64 aa)) are disordered. The segment covering 90 to 106 (SSSSECSSYGGFSSSEA) has biased composition (low complexity).

It belongs to the BIG GRAIN 1 (BG1) plant protein family. As to expression, mostly expressed in the vascular tissues of leaves, culms and young panicles, especially in hulls.

The protein localises to the cell membrane. Involved in auxin transport. Positive regulator of the auxin signaling pathway involved in gravitropism, plant growth and grain development. In Oryza sativa subsp. japonica (Rice), this protein is Protein BIG GRAIN 1.